The following is a 158-amino-acid chain: Phosphopantetheine adenylyltransferase (158 aa).

Thr10 lines the substrate pocket. ATP-binding positions include 10-11 (TF) and His18. Positions 42, 74, and 88 each coordinate substrate. ATP contacts are provided by residues 89 to 91 (GIR), Glu99, and 124 to 130 (WRYLSST).

The protein belongs to the bacterial CoaD family. As to quaternary structure, homohexamer. Requires Mg(2+) as cofactor.

The protein resides in the cytoplasm. The catalysed reaction is (R)-4'-phosphopantetheine + ATP + H(+) = 3'-dephospho-CoA + diphosphate. The protein operates within cofactor biosynthesis; coenzyme A biosynthesis; CoA from (R)-pantothenate: step 4/5. In terms of biological role, reversibly transfers an adenylyl group from ATP to 4'-phosphopantetheine, yielding dephospho-CoA (dPCoA) and pyrophosphate. The polypeptide is Phosphopantetheine adenylyltransferase (Actinobacillus pleuropneumoniae serotype 5b (strain L20)).